The chain runs to 198 residues: Cell division protein SepF (198 aa).

A disordered region spans residues 170–198 (EVPQPPARPARPASTNPPAWGNETNRMAQ). Residues 179–188 (ARPASTNPPA) are compositionally biased toward low complexity.

Belongs to the SepF family. In terms of assembly, homodimer. Interacts with FtsZ.

The protein resides in the cytoplasm. Functionally, cell division protein that is part of the divisome complex and is recruited early to the Z-ring. Probably stimulates Z-ring formation, perhaps through the cross-linking of FtsZ protofilaments. Its function overlaps with FtsA. This is Cell division protein SepF from Nostoc sp. (strain PCC 7120 / SAG 25.82 / UTEX 2576).